The chain runs to 572 residues: Vacuolar protein sorting-associated protein vps901 (572 aa).

Basic and acidic residues-rich tracts occupy residues 1–31 and 39–53; these read MDYP…EKPL and DEQR…KNHD. The segment at 1 to 108 is disordered; the sequence is MDYPSFHEDP…HENNPGQQEI (108 aa). A compositionally biased stretch (polar residues) spans 69 to 80; sequence QYEQTDSSSDQE. Over residues 82 to 98 the composition is skewed to basic and acidic residues; sequence MNEKQSLDKENRNDNIP. Positions 219–357 constitute a VPS9 domain; it reads VEEDRVLSEK…IETLDCSSLT (139 aa). The tract at residues 430 to 502 is disordered; the sequence is QIDTPESKEY…IVHEEQPVDD (73 aa). Positions 445–457 are enriched in polar residues; that stretch reads PRGSSHSGSFTTD. Positions 529-571 constitute a CUE domain; the sequence is REKAEAITALRAMFPAFDSEVIEVVLNAQQGRLSSSIDSLLEM.

Its function is as follows. Required for vacuolar protein sorting; may be required for the consumption of transport vesicles containing vacuolar protein precursors. Required for vacuolar fusion. The chain is Vacuolar protein sorting-associated protein vps901 (vps901) from Schizosaccharomyces pombe (strain 972 / ATCC 24843) (Fission yeast).